The chain runs to 124 residues: Small ribosomal subunit protein uS12 (124 aa).

A disordered region spans residues 1-30; sequence MPTIQQLVRKGRTPKVTKTKAPALKANPQQ. A compositionally biased stretch (basic residues) spans 9–18; sequence RKGRTPKVTK.

The protein belongs to the universal ribosomal protein uS12 family. As to quaternary structure, part of the 30S ribosomal subunit. Contacts proteins S8 and S17. May interact with IF1 in the 30S initiation complex.

With S4 and S5 plays an important role in translational accuracy. In terms of biological role, interacts with and stabilizes bases of the 16S rRNA that are involved in tRNA selection in the A site and with the mRNA backbone. Located at the interface of the 30S and 50S subunits, it traverses the body of the 30S subunit contacting proteins on the other side and probably holding the rRNA structure together. The combined cluster of proteins S8, S12 and S17 appears to hold together the shoulder and platform of the 30S subunit. The chain is Small ribosomal subunit protein uS12 from Leifsonia xyli subsp. xyli (strain CTCB07).